The primary structure comprises 205 residues: Beta-crystallin B2 (205 aa).

Alanine 2 is modified (N-acetylalanine). The tract at residues 2-16 (ASDHQTQAGKPQPLN) is N-terminal arm. Beta/gamma crystallin 'Greek key' domains are found at residues 17 to 56 (PKIIIFEQENFQGHSHELSGPCPNLKETGMEKAGSVLVQA) and 57 to 101 (GPWV…RPIK). The segment at 102-106 (VDSQE) is connecting peptide. Beta/gamma crystallin 'Greek key' domains lie at 107 to 148 (HKII…RVQS) and 149 to 191 (GTWV…RRIR). The segment at 193-205 (MQWHQRGAFHPSS) is C-terminal arm.

It belongs to the beta/gamma-crystallin family. Homo/heterodimer, or complexes of higher-order. The structure of beta-crystallin oligomers seems to be stabilized through interactions between the N-terminal arms.

Functionally, crystallins are the dominant structural components of the vertebrate eye lens. This chain is Beta-crystallin B2 (CRYBB2), found in Mesocricetus auratus (Golden hamster).